Consider the following 437-residue polypeptide: Cobyrinate a,c-diamide synthase (437 aa).

A GATase cobBQ-type domain is found at 243–433 (IAAIAYDSAF…SHFHFSSARG (191 aa)). The Nucleophile role is filled by Cys324.

This sequence belongs to the CobB/CbiA family. It depends on Mg(2+) as a cofactor.

The enzyme catalyses cob(II)yrinate + 2 L-glutamine + 2 ATP + 2 H2O = cob(II)yrinate a,c diamide + 2 L-glutamate + 2 ADP + 2 phosphate + 2 H(+). It participates in cofactor biosynthesis; adenosylcobalamin biosynthesis; cob(II)yrinate a,c-diamide from sirohydrochlorin (anaerobic route): step 10/10. Catalyzes the ATP-dependent amidation of the two carboxylate groups at positions a and c of cobyrinate, using either L-glutamine or ammonia as the nitrogen source. The protein is Cobyrinate a,c-diamide synthase of Sulfurisphaera tokodaii (strain DSM 16993 / JCM 10545 / NBRC 100140 / 7) (Sulfolobus tokodaii).